We begin with the raw amino-acid sequence, 120 residues long: Protein TCL1B4 (120 aa).

This sequence belongs to the TCL1 family.

The polypeptide is Protein TCL1B4 (Tcl1b4) (Mus musculus (Mouse)).